Reading from the N-terminus, the 179-residue chain is Large ribosomal subunit protein uL5 (179 aa).

The protein belongs to the universal ribosomal protein uL5 family. Part of the 50S ribosomal subunit; part of the 5S rRNA/L5/L18/L25 subcomplex. Contacts the 5S rRNA and the P site tRNA. Forms a bridge to the 30S subunit in the 70S ribosome.

Its function is as follows. This is one of the proteins that bind and probably mediate the attachment of the 5S RNA into the large ribosomal subunit, where it forms part of the central protuberance. In the 70S ribosome it contacts protein S13 of the 30S subunit (bridge B1b), connecting the 2 subunits; this bridge is implicated in subunit movement. Contacts the P site tRNA; the 5S rRNA and some of its associated proteins might help stabilize positioning of ribosome-bound tRNAs. This chain is Large ribosomal subunit protein uL5, found in Exiguobacterium sp. (strain ATCC BAA-1283 / AT1b).